A 404-amino-acid chain; its full sequence is Glucosyl-3-phosphoglycerate synthase (404 aa).

Position 146 (D146) interacts with a divalent metal cation. A (2R)-3-phosphoglycerate-binding site is contributed by 188-190 (GRV). H270 serves as a coordination point for a divalent metal cation.

The protein belongs to the glycosyltransferase 2 family. Mn(2+) serves as cofactor. Requires Co(2+) as cofactor. The cofactor is Mg(2+).

The catalysed reaction is an NDP-alpha-D-glucose + (2R)-3-phosphoglycerate = (2R)-2-O-(alpha-D-glucopyranosyl)-3-phospho-glycerate + a ribonucleoside 5'-diphosphate + H(+). In terms of biological role, involved in the biosynthesis of 6-O-methylglucose lipopolysaccarides (MGLPs). Catalyzes the transfer of a glucose (Glc) moiety from uridine diphosphate (UDP-Glc) to the position 2 of 3-phospho-D-glycerate (3-PGA) to form glucosyl-3-phosphoglycerate (GPG). This is Glucosyl-3-phosphoglycerate synthase from Methanococcoides burtonii (strain DSM 6242 / NBRC 107633 / OCM 468 / ACE-M).